The sequence spans 1025 residues: Multidrug resistance protein MdtC (1025 aa).

12 consecutive transmembrane segments (helical) span residues 16–36, 333–353, 360–380, 387–407, 431–451, 459–479, 528–548, 853–873, 875–895, 897–917, 953–973, and 984–1004; these read LLTLAIALAGILGFRLLPVAP, EVEQSLMIAVALVILVVFVFL, LIPAVAVPVSLIGTFAAMYLC, LSLMALTIATGFVVDDAIVVL, VGFTVLSMSLSLIAVFLPLLM, FFAEFSITLSVAILISLFVSV, WVLLLLLGTVALTVWLFISIP, LWLMLAAIAAVYIVLGILYES, VHPLTILSTLPSAGVGALLAL, LFDTPFSLIALIGILLLIGIV, PILMTTLAALFGALPLVLTSG, and ITIAGGLIMSQLLTLYTTPVV.

Belongs to the resistance-nodulation-cell division (RND) (TC 2.A.6) family. MdtC subfamily. In terms of assembly, part of a tripartite efflux system composed of MdtA, MdtB and MdtC. MdtC forms a heteromultimer with MdtB.

Its subcellular location is the cell inner membrane. This is Multidrug resistance protein MdtC from Pantoea ananatis (strain AJ13355).